Here is a 1694-residue protein sequence, read N- to C-terminus: Homeobox-DDT domain protein RLT2 (1694 aa).

The interval 1–24 is disordered; it reads MEGGSEKTTPEGCGGESKSKRKMK. The segment at residues 17–76 is a DNA-binding region (homeobox); the sequence is SKSKRKMKTAAQLEVLENTYSAEPYPSEAIRADLSVKLNLSDRQLQMWFCHRRLKERKST. One can recognise a DDT domain in the interval 514–573; sequence DENVANLLMVWRFLITFADVLGLWPFTLDEFAQAFHDYDPRLMGEIHIVLLKTIIKDIEG. Residues 696-765 form the HTH HARE-type domain; sequence GTVKFAAFHV…APSTYCVRAS (70 aa). The segment covering 795-816 has biased composition (acidic residues); that stretch reads EDVDDAERDEDSESDVGEDPEV. Disordered regions lie at residues 795–822, 1450–1541, 1555–1639, and 1655–1674; these read EDVD…NLKK, KQEE…ICNE, AKTS…MNMK, and EDSY…AATR. 2 positions are modified to phosphoserine: Ser806 and Ser808. Positions 1459–1470 are enriched in gly residues; it reads GLGGVSSSGRGG. Basic residues-rich tracts occupy residues 1471 to 1485 and 1515 to 1531; these read RPPR…RGNG and GGRK…RKRP. Composition is skewed to acidic residues over residues 1561-1578, 1589-1605, and 1624-1635; these read DNDD…DDGE, EDYD…DFDG, and DEYEEEEEEEED.

As to quaternary structure, interacts with CHR11. Interacts (via the DDT domain) with CHR11 (via C-terminus). Highly expressed in growing tissues such as inflorescence and flower meristems, young leaves and floral organs. Expressed in roots, rosette and cauline leaves, stems, flowers, inflorescences and siliques.

It is found in the nucleus. In terms of biological role, transcriptional regulator required for the maintenance of the plant vegetative phase. In association with CHR11 or CHR17 may prevent the early activation of the vegetative-to-reproductive transition by regulating key genes that contribute to flower timing, such as FT, SEP1, SEP3, AGL8/FUL, SOC1 and FLC. Involved in the transcriptional regulation of seed-specific gene expression. This chain is Homeobox-DDT domain protein RLT2, found in Arabidopsis thaliana (Mouse-ear cress).